A 70-amino-acid chain; its full sequence is Large ribosomal subunit protein bL31 (70 aa).

The protein belongs to the bacterial ribosomal protein bL31 family. Type A subfamily. In terms of assembly, part of the 50S ribosomal subunit.

In terms of biological role, binds the 23S rRNA. The polypeptide is Large ribosomal subunit protein bL31 (Mycoplasma mobile (strain ATCC 43663 / 163K / NCTC 11711) (Mesomycoplasma mobile)).